The sequence spans 1047 residues: Atrial natriuretic peptide receptor 2 (1047 aa).

A signal peptide spans 1–16; it reads MALPSLLLVVAALAGG. Residues 17-458 lie on the Extracellular side of the membrane; it reads VRPPGARNLT…DKTPLSTLAI (442 aa). N-linked (GlcNAc...) asparagine glycans are attached at residues Asn24 and Asn35. Cysteines 75 and 101 form a disulfide. N-linked (GlcNAc...) asparagine glycans are attached at residues Asn161, Asn195, Asn244, Asn277, and Asn349. Residues 459–478 traverse the membrane as a helical segment; sequence VALGTGITFIMFGVSSFLIF. At 479-1047 the chain is on the cytoplasmic side; that stretch reads RKLMLEKELA…GERKGPAGLL (569 aa). Residue Ser513 is modified to Phosphoserine. A Protein kinase domain is found at 513-786; sequence SRLTLSLRGS…PDFGQIKGFI (274 aa). At Thr516 the chain carries Phosphothreonine. Phosphoserine occurs at positions 518, 522, 523, and 526. Thr529 is modified (phosphothreonine). One can recognise a Guanylate cyclase domain in the interval 861–991; sequence TIYFSDIVGF…DTVNTASRME (131 aa).

It belongs to the adenylyl cyclase class-4/guanylyl cyclase family. In terms of processing, phosphorylated. Phosphorylation of the protein kinase-like domain is required for full activation by CNP. Glycosylated.

It is found in the cell membrane. It carries out the reaction GTP = 3',5'-cyclic GMP + diphosphate. Functionally, receptor for the C-type natriuretic peptide NPPC/CNP hormone. Has guanylate cyclase activity upon binding of its ligand. May play a role in the regulation of skeletal growth. The sequence is that of Atrial natriuretic peptide receptor 2 (NPR2) from Bos taurus (Bovine).